A 192-amino-acid polypeptide reads, in one-letter code: Cytidylate kinase (192 aa).

Residue 7-15 (GPPGSGKST) participates in ATP binding.

The protein belongs to the cytidylate kinase family. Type 2 subfamily.

Its subcellular location is the cytoplasm. The enzyme catalyses CMP + ATP = CDP + ADP. It carries out the reaction dCMP + ATP = dCDP + ADP. This is Cytidylate kinase from Halorubrum lacusprofundi (strain ATCC 49239 / DSM 5036 / JCM 8891 / ACAM 34).